A 436-amino-acid polypeptide reads, in one-letter code: Trigger factor (436 aa).

Residues 161–246 (DDQLNIDFVG…VNSVAEPKLP (86 aa)) enclose the PPIase FKBP-type domain.

It belongs to the FKBP-type PPIase family. Tig subfamily.

The protein resides in the cytoplasm. It carries out the reaction [protein]-peptidylproline (omega=180) = [protein]-peptidylproline (omega=0). Functionally, involved in protein export. Acts as a chaperone by maintaining the newly synthesized protein in an open conformation. Functions as a peptidyl-prolyl cis-trans isomerase. This chain is Trigger factor, found in Pseudomonas aeruginosa (strain LESB58).